An 88-amino-acid chain; its full sequence is Small ribosomal subunit protein bS20 (88 aa).

Positions 1–25 are disordered; the sequence is MANSAQARKRVRQNNTRRQHAASQR. Residues 7 to 20 show a composition bias toward basic residues; the sequence is ARKRVRQNNTRRQH.

Belongs to the bacterial ribosomal protein bS20 family.

Functionally, binds directly to 16S ribosomal RNA. The protein is Small ribosomal subunit protein bS20 of Psychrobacter sp. (strain PRwf-1).